We begin with the raw amino-acid sequence, 895 residues long: Protein translocase subunit SecA (895 aa).

Residues Gln87, 105-109 (GEGKT), and Asp512 each bind ATP. A compositionally biased stretch (basic and acidic residues) spans 833–852 (TQEEVEQAERQRQEMAKRET). The disordered stretch occupies residues 833–895 (TQEEVEQAER…KHCHGSKAKY (63 aa)). Cys877, Cys879, Cys888, and His889 together coordinate Zn(2+). Over residues 883–895 (KKYKHCHGSKAKY) the composition is skewed to basic residues.

The protein belongs to the SecA family. As to quaternary structure, monomer and homodimer. Part of the essential Sec protein translocation apparatus which comprises SecA, SecYEG and auxiliary proteins SecDF-YajC and YidC. Zn(2+) serves as cofactor.

The protein resides in the cell inner membrane. It localises to the cytoplasm. The catalysed reaction is ATP + H2O + cellular proteinSide 1 = ADP + phosphate + cellular proteinSide 2.. In terms of biological role, part of the Sec protein translocase complex. Interacts with the SecYEG preprotein conducting channel. Has a central role in coupling the hydrolysis of ATP to the transfer of proteins into and across the cell membrane, serving both as a receptor for the preprotein-SecB complex and as an ATP-driven molecular motor driving the stepwise translocation of polypeptide chains across the membrane. The chain is Protein translocase subunit SecA from Pasteurella multocida (strain Pm70).